We begin with the raw amino-acid sequence, 48 residues long: Omega-agatoxin-Aa5a (48 aa).

Cystine bridges form between Cys-3–Cys-16, Cys-10–Cys-21, Cys-15–Cys-32, and Cys-23–Cys-30.

The protein belongs to the neurotoxin 02 (plectoxin) family. In terms of tissue distribution, expressed by the venom gland.

It is found in the secreted. In terms of biological role, the toxin blocks voltage-gated calcium channels in rat cerebellar granule cells (IC(50)=200 nM). The chain is Omega-agatoxin-Aa5a from Agelenopsis aperta (North American funnel-web spider).